Here is a 245-residue protein sequence, read N- to C-terminus: Orotidine 5'-phosphate decarboxylase (245 aa).

Substrate is bound by residues Asp22, Lys44, 71-80 (DLKFHDIPNT), Thr131, Arg192, Gln201, Gly221, and Arg222. Lys73 (proton donor) is an active-site residue.

It belongs to the OMP decarboxylase family. Type 1 subfamily. Homodimer.

The catalysed reaction is orotidine 5'-phosphate + H(+) = UMP + CO2. It participates in pyrimidine metabolism; UMP biosynthesis via de novo pathway; UMP from orotate: step 2/2. In terms of biological role, catalyzes the decarboxylation of orotidine 5'-monophosphate (OMP) to uridine 5'-monophosphate (UMP). The chain is Orotidine 5'-phosphate decarboxylase from Yersinia pseudotuberculosis serotype O:1b (strain IP 31758).